Here is a 1133-residue protein sequence, read N- to C-terminus: Lon protease homolog, mitochondrial (1133 aa).

The N-terminal 37 residues, 1–37 (MLRTRTTKTLSTVARTTRAIQYYRSIAKTAAVSQRRF), are a transit peptide targeting the mitochondrion. Positions 38–98 (ASTLTVRDVE…ATNSGKSILA (61 aa)) are cleaved as a propeptide — removed in mature form; by autocatalysis. 2 stretches are compositionally biased toward basic and acidic residues: residues 98-117 (AKDD…VPDE) and 125-143 (EPTR…EASK). 2 disordered regions span residues 98–176 (AKDD…KDVP) and 282–358 (ELFP…LDDI). Low complexity predominate over residues 145-166 (SRSSASGGGQSSSSRSDSGDGS). The Lon N-terminal domain maps to 182–480 (MLALPIARRP…KSLLVLKKEL (299 aa)). Basic and acidic residues-rich tracts occupy residues 282 to 301 (ELFP…KDTD) and 325 to 340 (KLED…SELQ). Acidic residues predominate over residues 348-358 (TEEESEELDDI). ATP is bound at residue 632 to 639 (GPPGVGKT). The dispensable for catalytic activity stretch occupies residues 839–892 (KKLSIEDSPTSSADSKPKESVSSEEKAENNAKSSSEKTKDNNSEKTSDDIEALK). A disordered region spans residues 844–889 (EDSPTSSADSKPKESVSSEEKAENNAKSSSEKTKDNNSEKTSDDIE). Residues 853-889 (SKPKESVSSEEKAENNAKSSSEKTKDNNSEKTSDDIE) are compositionally biased toward basic and acidic residues. Residues 923 to 1109 (TTPPGVVMGL…NDIFQKLFKD (187 aa)) form the Lon proteolytic domain. Active-site residues include Ser1015 and Lys1058.

The protein belongs to the peptidase S16 family. In terms of assembly, homohexamer. Organized in a ring with a central cavity. The ATP-binding and proteolytic domains (AP-domain) form a hexameric chamber. Oligomerization is independent of its proteolytic activity and the autocatalytic maturation of its subunits.

The protein localises to the mitochondrion matrix. It carries out the reaction Hydrolysis of proteins in presence of ATP.. Functionally, ATP-dependent serine protease that mediates the selective degradation of misfolded, unassembled or oxidatively damaged polypeptides as well as certain short-lived regulatory proteins in the mitochondrial matrix. May also have a chaperone function in the assembly of inner membrane protein complexes. Participates in the regulation of mitochondrial gene expression and in the maintenance of the integrity of the mitochondrial genome. Binds to mitochondrial DNA in a site-specific manner. Endogenous substrates include ABF2, ACO2, ILV1, ILV2, LSC1, LYS4, MGM101 and several oxidized proteins. The 2 nucleic acid-binding proteins ABF2 and MGM101 are protected from degradation by PIM1 when they are bound to DNA. This chain is Lon protease homolog, mitochondrial, found in Saccharomyces cerevisiae (strain ATCC 204508 / S288c) (Baker's yeast).